Here is a 272-residue protein sequence, read N- to C-terminus: uncharacterized protein (272 aa).

NAD(+) contacts are provided by residues 12–34 (FITGAARGLGRAHAVRLAADGAN), 39–40 (DI), 77–78 (DV), and N104. S153 contacts substrate. The Proton acceptor role is filled by Y170. NAD(+) is bound by residues K174 and 203-205 (VDT).

This sequence belongs to the short-chain dehydrogenases/reductases (SDR) family.

This is an uncharacterized protein from Mycobacterium tuberculosis (strain CDC 1551 / Oshkosh).